We begin with the raw amino-acid sequence, 361 residues long: 3-dehydroquinate synthase (361 aa).

NAD(+) is bound by residues 106–110 (GVVGD), 130–131 (TT), lysine 143, and lysine 152. Glutamate 185, histidine 247, and histidine 264 together coordinate Zn(2+).

It belongs to the sugar phosphate cyclases superfamily. Dehydroquinate synthase family. NAD(+) is required as a cofactor. Requires Co(2+) as cofactor. The cofactor is Zn(2+).

The protein localises to the cytoplasm. The enzyme catalyses 7-phospho-2-dehydro-3-deoxy-D-arabino-heptonate = 3-dehydroquinate + phosphate. It participates in metabolic intermediate biosynthesis; chorismate biosynthesis; chorismate from D-erythrose 4-phosphate and phosphoenolpyruvate: step 2/7. In terms of biological role, catalyzes the conversion of 3-deoxy-D-arabino-heptulosonate 7-phosphate (DAHP) to dehydroquinate (DHQ). This chain is 3-dehydroquinate synthase, found in Gloeobacter violaceus (strain ATCC 29082 / PCC 7421).